We begin with the raw amino-acid sequence, 269 residues long: 3-deoxy-manno-octulosonate cytidylyltransferase (269 aa).

This sequence belongs to the KdsB family.

It localises to the cytoplasm. It carries out the reaction 3-deoxy-alpha-D-manno-oct-2-ulosonate + CTP = CMP-3-deoxy-beta-D-manno-octulosonate + diphosphate. It functions in the pathway nucleotide-sugar biosynthesis; CMP-3-deoxy-D-manno-octulosonate biosynthesis; CMP-3-deoxy-D-manno-octulosonate from 3-deoxy-D-manno-octulosonate and CTP: step 1/1. It participates in bacterial outer membrane biogenesis; lipopolysaccharide biosynthesis. Its function is as follows. Activates KDO (a required 8-carbon sugar) for incorporation into bacterial lipopolysaccharide in Gram-negative bacteria. The sequence is that of 3-deoxy-manno-octulosonate cytidylyltransferase from Cupriavidus necator (strain ATCC 17699 / DSM 428 / KCTC 22496 / NCIMB 10442 / H16 / Stanier 337) (Ralstonia eutropha).